Reading from the N-terminus, the 483-residue chain is Aspartyl/glutamyl-tRNA(Asn/Gln) amidotransferase subunit B (483 aa).

Belongs to the GatB/GatE family. GatB subfamily. As to quaternary structure, heterotrimer of A, B and C subunits.

It catalyses the reaction L-glutamyl-tRNA(Gln) + L-glutamine + ATP + H2O = L-glutaminyl-tRNA(Gln) + L-glutamate + ADP + phosphate + H(+). The catalysed reaction is L-aspartyl-tRNA(Asn) + L-glutamine + ATP + H2O = L-asparaginyl-tRNA(Asn) + L-glutamate + ADP + phosphate + 2 H(+). Its function is as follows. Allows the formation of correctly charged Asn-tRNA(Asn) or Gln-tRNA(Gln) through the transamidation of misacylated Asp-tRNA(Asn) or Glu-tRNA(Gln) in organisms which lack either or both of asparaginyl-tRNA or glutaminyl-tRNA synthetases. The reaction takes place in the presence of glutamine and ATP through an activated phospho-Asp-tRNA(Asn) or phospho-Glu-tRNA(Gln). This chain is Aspartyl/glutamyl-tRNA(Asn/Gln) amidotransferase subunit B, found in Lachnospira eligens (strain ATCC 27750 / DSM 3376 / VPI C15-48 / C15-B4) (Eubacterium eligens).